The primary structure comprises 24 residues: U1-plectoxin-Pt1e (24 aa).

C4 and C18 are disulfide-bonded.

This sequence belongs to the neurotoxin 02 (plectoxin) family. 02 (plectoxin) subfamily. Post-translationally, contains 5 disulfide bonds. Expressed by the venom gland.

The protein localises to the secreted. Functionally, potent toxin that may paralyze and/or kill insect pests such as H.virescens (lepidoptera), S.exigua (beet armyworm) and M.sexta (tobacco hornworm). This is U1-plectoxin-Pt1e from Plectreurys tristis (Spider).